The sequence spans 353 residues: 2-Hydroxyacid oxidase 2 (353 aa).

The region spanning 2 to 353 (PLVCLTDFRE…NQDLIQFSRL (352 aa)) is the FMN hydroxy acid dehydrogenase domain. Residues 77–79 (PTG), Ser-106, and Gln-128 contribute to the FMN site. Tyr-130 is a binding site for a 2-oxocarboxylate. Residue Thr-156 participates in FMN binding. Residue Arg-165 participates in a 2-oxocarboxylate binding. Lys-224 is an FMN binding site. Catalysis depends on His-248, which acts as the Proton acceptor. Arg-251 serves as a coordination point for a 2-oxocarboxylate. Residues 279–283 (DGGIR) and 302–303 (GR) contribute to the FMN site. The short motif at 351–353 (SRL) is the Microbody targeting signal element.

It belongs to the FMN-dependent alpha-hydroxy acid dehydrogenase family. As to quaternary structure, homotetramer. FMN serves as cofactor.

Its subcellular location is the peroxisome. It catalyses the reaction a (2S)-2-hydroxycarboxylate + O2 = a 2-oxocarboxylate + H2O2. The enzyme catalyses 2-hydroxyhexadecanoate + O2 = 2-oxohexadecanoate + H2O2. It carries out the reaction 2-hydroxyoctanoate + O2 = 2-oxooctanoate + H2O2. The protein operates within lipid metabolism; fatty acid metabolism. Oxidase that catalyzes the oxidation of medium and long chain hydroxyacids such as 2-hydroxyhexadecanoate and 2-hydroxyoctanoate, to the correspondong 2-oxoacids. Its role in the oxidation of 2-hydroxy fatty acids may contribute to the general pathway of fatty acid alpha-oxidation. Active in vitro with the artificial electron acceptor 2,6-dichlorophenolindophenol (DCIP), but O2 is believed to be the physiological electron acceptor, leading to the production of H2O2. The polypeptide is 2-Hydroxyacid oxidase 2 (HAO2) (Bos taurus (Bovine)).